The chain runs to 5146 residues: SCO-spondin (5146 aa).

An N-terminal signal peptide occupies residues M1–G17. Residues R18–H94 form the EMI domain. N-linked (GlcNAc...) asparagine glycosylation is found at N80, N122, and N153. Positions A185–L356 constitute a VWFD 1 domain. 3 disulfides stabilise this stretch: C187–C317, C209–C355, and C231–C237. Residue N255 is glycosylated (N-linked (GlcNAc...) asparagine). The region spanning C464–C519 is the TIL 1 domain. Positions A557–S730 constitute a VWFD 2 domain. Cystine bridges form between C559–C692 and C583–C729. Residue N814 is glycosylated (N-linked (GlcNAc...) asparagine). The region spanning C822–C875 is the TIL 2 domain. An N-linked (GlcNAc...) asparagine glycan is attached at N906. Positions G1008–P1178 constitute a VWFD 3 domain. Intrachain disulfides connect C1010-C1142, C1032-C1177, and C1053-C1060. The region spanning C1271–C1327 is the TIL 3 domain. N1349 carries N-linked (GlcNAc...) asparagine glycosylation. 6 consecutive LDL-receptor class A domains span residues G1372–A1409, V1412–C1447, P1448–L1484, D1488–P1526, P1561–D1597, and P1599–E1638. Disulfide bonds link C1373/C1386, C1380/C1399, C1393/C1408, C1413/C1425, C1420/C1438, C1432/C1447, C1449/C1461, C1456/C1474, C1468/C1483, C1489/C1501, C1496/C1514, C1508/C1525, C1562/C1574, C1569/C1587, C1581/C1596, C1600/C1613, C1607/C1626, and C1620/C1637. N-linked (GlcNAc...) asparagine glycosylation occurs at N1647. An LDL-receptor class A 7 domain is found at P1652–G1690. TSP type-1 domains are found at residues C1691 to P1745 and D1747 to P1805. Intrachain disulfides connect C1703–C1739, C1707–C1744, and C1718–C1729. N1806 carries N-linked (GlcNAc...) asparagine glycosylation. In terms of domain architecture, TIL 4 spans C1809–C1865. EGF-like domains are found at residues C1821–V1860 and W1861–Q1898. The region spanning N1906–E1962 is the TSP type-1 3 domain. 3 cysteine pairs are disulfide-bonded: C1907-C1946, C1918-C1922, and C1956-C1961. The region spanning E1962 to V2022 is the VWFC 1 domain. N-linked (GlcNAc...) asparagine glycosylation is found at N2027 and N2127. Disulfide bonds link C2062-C2220, C2226-C2238, C2233-C2251, and C2245-C2260. The 159-residue stretch at C2062–C2220 folds into the F5/8 type C domain. Residues L2225–V2261 enclose the LDL-receptor class A 8 domain. The tract at residues T2262–A2346 is disordered. Composition is skewed to polar residues over residues T2273–P2284 and G2331–E2343. LDL-receptor class A domains lie at Q2382 to A2418 and L2442 to V2478. Intrachain disulfides connect C2383-C2395, C2390-C2408, C2402-C2417, C2443-C2455, C2450-C2468, C2462-C2477, C2480-C2516, C2491-C2495, C2526-C2531, C2546-C2583, C2550-C2588, and C2561-C2573. 2 consecutive TSP type-1 domains span residues D2479 to P2532 and A2534 to A2589. The TIL 5 domain maps to V2611–C2654. N-linked (GlcNAc...) asparagine glycans are attached at residues N2624 and N2673. TSP type-1 domains follow at residues P2694–G2748, V2751–L2807, and L2809–T2862. Intrachain disulfides connect C2695–C2733, C2706–C2710, C2743–C2747, C2763–C2801, C2767–C2806, C2783–C2791, C2821–C2856, C2825–C2861, and C2836–C2846. Residues N2915 and N2946 are each glycosylated (N-linked (GlcNAc...) asparagine). 2 TSP type-1 domains span residues A2964–G3019 and G3020–P3071. 3 disulfide bridges follow: C2965–C3003, C2976–C2980, and C3013–C3018. N-linked (GlcNAc...) asparagine glycosylation is present at N3041. Residues C3070–C3122 enclose the TIL 6 domain. Residues N3143 and N3153 are each glycosylated (N-linked (GlcNAc...) asparagine). 2 consecutive TSP type-1 domains span residues Q3163–D3230 and A3232–P3287. Intrachain disulfides connect C3175–C3224, C3179–C3229, C3190–C3214, C3244–C3281, C3248–C3286, and C3259–C3271. Residue N3290 is glycosylated (N-linked (GlcNAc...) asparagine). The TIL 7 domain maps to E3295 to C3345. TSP type-1 domains lie at P3388–P3450 and D3452–T3507. 6 disulfide bridges follow: C3400–C3443, C3404–C3449, C3415–C3427, C3464–C3499, C3467–C3506, and C3477–C3489. Residues N3502, N3580, and N3607 are each glycosylated (N-linked (GlcNAc...) asparagine). The 49-residue stretch at L3626–R3674 folds into the TSP type-1 15 domain. Cystine bridges form between C3638-C3668, C3642-C3673, and C3653-C3658. The N-linked (GlcNAc...) asparagine glycan is linked to N3783. TSP type-1 domains follow at residues A3802–P3858, P3872–T3924, N3938–P3994, and P3996–E4051. 3 disulfide bridges follow: C3814/C3852, C3818/C3857, and C3830/C3842. N3906 and N3938 each carry an N-linked (GlcNAc...) asparagine glycan. 6 disulfide bridges follow: C3939/C3975, C3950/C3954, C3988/C3993, C4008/C4045, C4012/C4050, and C4023/C4035. The region spanning C4054–C4109 is the TIL 8 domain. The VWFC 2 domain occupies G4101–G4168. N4131 carries an N-linked (GlcNAc...) asparagine glycan. 4 TSP type-1 domains span residues H4151–P4204, L4245–P4300, L4302–L4358, and E4360–S4414. Intrachain disulfides connect C4152-C4188, C4163-C4167, C4198-C4203, C4257-C4294, C4261-C4299, and C4272-C4284. N-linked (GlcNAc...) asparagine glycosylation is present at N4341. 3 cysteine pairs are disulfide-bonded: C4361-C4398, C4372-C4374, and C4408-C4413. N4412 carries N-linked (GlcNAc...) asparagine glycosylation. In terms of domain architecture, TIL 9 spans C4418 to C4473. Residues L4610 to P4661 enclose the TSP type-1 24 domain. 3 cysteine pairs are disulfide-bonded: C4611/C4645, C4622/C4626, and C4655/C4660. The region spanning D4675 to C4721 is the TIL 10 domain. N-linked (GlcNAc...) asparagine glycosylation is found at N4729, N4746, N4751, and N4772. A TSP type-1 25 domain is found at C4761–P4814. 3 disulfide bridges follow: C4773-C4808, C4777-C4813, and C4788-C4797. One can recognise a TIL 11 domain in the interval C4816 to C4870. N4861, N4901, N4947, and N4954 each carry an N-linked (GlcNAc...) asparagine glycan. Residues C4983–R5041 enclose the VWFC 3 domain. Disulfide bonds link C5052/C5100, C5066/C5117, C5076/C5133, and C5080/C5135. Residues C5052–Q5139 form the CTCK domain. Residue N5060 is glycosylated (N-linked (GlcNAc...) asparagine).

It belongs to the thrombospondin family. In terms of tissue distribution, subcommissural organ. Located at the boundary of the diencephalon and mesencephalon beneath the posterior commissure at the point where the axons cross the midline.

It localises to the secreted. It is found in the extracellular space. Involved in the modulation of neuronal aggregation. May be involved in developmental events during the formation of the central nervous system. The protein is SCO-spondin (SSPO) of Bos taurus (Bovine).